We begin with the raw amino-acid sequence, 456 residues long: tRNA modification GTPase MnmE (456 aa).

(6S)-5-formyl-5,6,7,8-tetrahydrofolate is bound by residues Arg26, Glu86, and Arg125. The TrmE-type G domain maps to 222–376 (GLSTAIIGRP…IEDRINQLFF (155 aa)). Residue Asn232 participates in K(+) binding. Residues 232–237 (NVGKSS), 251–257 (TDIEGTT), and 276–279 (DTAG) each bind GTP. Residue Ser236 coordinates Mg(2+). K(+) contacts are provided by Thr251, Ile253, and Thr256. Thr257 is a Mg(2+) binding site. A (6S)-5-formyl-5,6,7,8-tetrahydrofolate-binding site is contributed by Lys456.

Belongs to the TRAFAC class TrmE-Era-EngA-EngB-Septin-like GTPase superfamily. TrmE GTPase family. As to quaternary structure, homodimer. Heterotetramer of two MnmE and two MnmG subunits. K(+) serves as cofactor.

Its subcellular location is the cytoplasm. Its function is as follows. Exhibits a very high intrinsic GTPase hydrolysis rate. Involved in the addition of a carboxymethylaminomethyl (cmnm) group at the wobble position (U34) of certain tRNAs, forming tRNA-cmnm(5)s(2)U34. The protein is tRNA modification GTPase MnmE of Streptococcus thermophilus (strain CNRZ 1066).